Here is a 602-residue protein sequence, read N- to C-terminus: Spermidine-citrate ligase (602 aa).

ATP is bound by residues 286 to 288 (SLR), Lys-300, and Arg-312.

It belongs to the IucA/IucC family.

The enzyme catalyses spermidine + citrate + ATP = N(8)-citryl-spermidine + AMP + diphosphate + H(+). It functions in the pathway siderophore biosynthesis; petrobactin biosynthesis. Its function is as follows. Involved in the biosynthesis of petrobactin, a catecholate siderophore that functions in both iron acquisition and virulence. Catalyzes the ATP-dependent condensation of citric acid and spermidine to form N(8)-citryl-spermidine. It can also catalyze the condensation of several di- and triamine analogs of spermidine with citric acid and the condensation of the citric acid analog tricarballylic acid with spermidine. Required for growth in iron-depleted medium and for full virulence in a mouse model of infection. This Bacillus anthracis protein is Spermidine-citrate ligase.